A 189-amino-acid polypeptide reads, in one-letter code: UPF0301 protein A1C_00165 (189 aa).

It belongs to the UPF0301 (AlgH) family.

The chain is UPF0301 protein A1C_00165 from Rickettsia akari (strain Hartford).